The sequence spans 99 residues: NAD(P)H-quinone oxidoreductase subunit 4L, chloroplastic (99 aa).

A run of 3 helical transmembrane segments spans residues 1 to 21 (MFEQ…FGLI), 31 to 51 (MSLE…SNLF), and 59 to 79 (IFTL…LAIA).

Belongs to the complex I subunit 4L family. NDH is composed of at least 16 different subunits, 5 of which are encoded in the nucleus.

It localises to the plastid. Its subcellular location is the chloroplast thylakoid membrane. It catalyses the reaction a plastoquinone + NADH + (n+1) H(+)(in) = a plastoquinol + NAD(+) + n H(+)(out). It carries out the reaction a plastoquinone + NADPH + (n+1) H(+)(in) = a plastoquinol + NADP(+) + n H(+)(out). Functionally, NDH shuttles electrons from NAD(P)H:plastoquinone, via FMN and iron-sulfur (Fe-S) centers, to quinones in the photosynthetic chain and possibly in a chloroplast respiratory chain. The immediate electron acceptor for the enzyme in this species is believed to be plastoquinone. Couples the redox reaction to proton translocation, and thus conserves the redox energy in a proton gradient. The chain is NAD(P)H-quinone oxidoreductase subunit 4L, chloroplastic from Adiantum capillus-veneris (Maidenhair fern).